We begin with the raw amino-acid sequence, 367 residues long: Aminomethyltransferase (367 aa).

This sequence belongs to the GcvT family. The glycine cleavage system is composed of four proteins: P, T, L and H.

The enzyme catalyses N(6)-[(R)-S(8)-aminomethyldihydrolipoyl]-L-lysyl-[protein] + (6S)-5,6,7,8-tetrahydrofolate = N(6)-[(R)-dihydrolipoyl]-L-lysyl-[protein] + (6R)-5,10-methylene-5,6,7,8-tetrahydrofolate + NH4(+). Functionally, the glycine cleavage system catalyzes the degradation of glycine. The chain is Aminomethyltransferase from Parasynechococcus marenigrum (strain WH8102).